The primary structure comprises 331 residues: MHNHNNRLVITPGEPAGVGPDLAIALAQQDWPVELVVCADPALLLARASQLNLPLQLREYQADQPAIAQQAGSLTILPVKTAVNVVPGKLDVGNSHYVVETLAKACDGAISGEFAALVTGPVQKSIINDAGIPFIGHTEFFADRSHCQRVVMMLATEELRVALATTHLPLLAVPGAITQASLHEVITILDNDLKTKFGITQPQIYVCGLNPHAGEGGHMGHEEIDTIIPALNTLRQQGINLIGPLPADTLFQPKYLQHADAVLAMYHDQGLPVLKYQGFGRAVNITLGLPFIRTSVDHGTALELAATGTADVGSFITALNLAIKMINNSNE.

The substrate site is built by H137 and T138. 3 residues coordinate a divalent metal cation: H167, H212, and H267. Residues K275, N284, and R293 each contribute to the substrate site.

The protein belongs to the PdxA family. As to quaternary structure, homodimer. Zn(2+) is required as a cofactor. It depends on Mg(2+) as a cofactor. The cofactor is Co(2+).

It is found in the cytoplasm. It carries out the reaction 4-(phosphooxy)-L-threonine + NAD(+) = 3-amino-2-oxopropyl phosphate + CO2 + NADH. It participates in cofactor biosynthesis; pyridoxine 5'-phosphate biosynthesis; pyridoxine 5'-phosphate from D-erythrose 4-phosphate: step 4/5. In terms of biological role, catalyzes the NAD(P)-dependent oxidation of 4-(phosphooxy)-L-threonine (HTP) into 2-amino-3-oxo-4-(phosphooxy)butyric acid which spontaneously decarboxylates to form 3-amino-2-oxopropyl phosphate (AHAP). The chain is 4-hydroxythreonine-4-phosphate dehydrogenase from Yersinia pseudotuberculosis serotype I (strain IP32953).